We begin with the raw amino-acid sequence, 390 residues long: Succinate--CoA ligase [ADP-forming] subunit beta (390 aa).

One can recognise an ATP-grasp domain in the interval 9-245 (KHLLKKYNIP…TTQEDEHETM (237 aa)). Residues K46, 53 to 55 (GRG), E99, S102, and E107 contribute to the ATP site. Positions 200 and 214 each coordinate Mg(2+). Residues N265 and 322–324 (GIV) contribute to the substrate site.

This sequence belongs to the succinate/malate CoA ligase beta subunit family. Heterotetramer of two alpha and two beta subunits. The cofactor is Mg(2+).

The enzyme catalyses succinate + ATP + CoA = succinyl-CoA + ADP + phosphate. It carries out the reaction GTP + succinate + CoA = succinyl-CoA + GDP + phosphate. The protein operates within carbohydrate metabolism; tricarboxylic acid cycle; succinate from succinyl-CoA (ligase route): step 1/1. Functionally, succinyl-CoA synthetase functions in the citric acid cycle (TCA), coupling the hydrolysis of succinyl-CoA to the synthesis of either ATP or GTP and thus represents the only step of substrate-level phosphorylation in the TCA. The beta subunit provides nucleotide specificity of the enzyme and binds the substrate succinate, while the binding sites for coenzyme A and phosphate are found in the alpha subunit. This Coxiella burnetii (strain Dugway 5J108-111) protein is Succinate--CoA ligase [ADP-forming] subunit beta.